The primary structure comprises 368 residues: Molybdenum import ATP-binding protein ModC (368 aa).

One can recognise an ABC transporter domain in the interval 1–230 (MTIKIQFKQT…HAMRPWQSFS (230 aa)). 32–39 (GRSGAGKT) serves as a coordination point for ATP. Positions 291 to 362 (ATSIRNVLPA…VKGVSVTQRD (72 aa)) constitute a Mop domain.

It belongs to the ABC transporter superfamily. Molybdate importer (TC 3.A.1.8) family. In terms of assembly, the complex is composed of two ATP-binding proteins (ModC), two transmembrane proteins (ModB) and a solute-binding protein (ModA).

The protein resides in the cell inner membrane. The catalysed reaction is molybdate(out) + ATP + H2O = molybdate(in) + ADP + phosphate + H(+). Its function is as follows. Part of the ABC transporter complex ModABC involved in molybdenum import. Responsible for energy coupling to the transport system. This chain is Molybdenum import ATP-binding protein ModC, found in Vibrio parahaemolyticus serotype O3:K6 (strain RIMD 2210633).